A 126-amino-acid polypeptide reads, in one-letter code: DNA-directed RNA polymerase I subunit RPA12 (126 aa).

Zn(2+) contacts are provided by C20, C23, C38, C41, C87, and C90. The C4-type zinc finger occupies 20-41 (CSDCGSVLPLPGAQDTVTCIRC). A TFIIS-type zinc finger spans residues 83–123 (VDRRCPRCGHEGMAYHTRQMRSADEGQTVFYTCTNCKFQEK). The Hairpin signature appears at 106–107 (DE). Residues C115 and C118 each coordinate Zn(2+).

This sequence belongs to the archaeal RpoM/eukaryotic RPA12/RPB9/RPC11 RNA polymerase family. Component of the RNA polymerase I (Pol I) complex consisting of 13 subunits: a ten-subunit catalytic core composed of POLR1A/RPA1, POLR1B/RPA2, POLR1C/RPAC1, POLR1D/RPAC2, POLR1H/RPA12, POLR2E/RPABC1, POLR2F/RPABC2, POLR2H/RPABC3, POLR2K/RPABC4 and POLR2L/RPABC5; a mobile stalk subunit POLR1F/RPA43 protruding from the core and additional subunits homologous to general transcription factors POLR1E/RPA49 and POLR1G/RPA34. Part of Pol I pre-initiation complex (PIC), in which Pol I core assembles with RRN3 and promoter-bound UTBF and SL1/TIF-IB complex.

Its subcellular location is the nucleus. It localises to the nucleolus. Its function is as follows. Core component of RNA polymerase I (Pol I), a DNA-dependent RNA polymerase which synthesizes ribosomal RNA precursors using the four ribonucleoside triphosphates as substrates. Can mediate Pol I proofreading of the nascent RNA transcript. Anchors into the Pol I active site to monitor transcription fidelity and cleave mis-incorporated 5'-ribonucleotides. The protein is DNA-directed RNA polymerase I subunit RPA12 of Homo sapiens (Human).